A 150-amino-acid polypeptide reads, in one-letter code: Avidin-related protein 1 (150 aa).

Positions 1–24 (MVHATSPLLLLLLLSLALVAPGLS) are cleaved as a signal peptide. Residues 26–147 (RKCSLTGKWD…GNNDFTRQRT (122 aa)) enclose the Avidin-like domain. Cys-28 and Cys-105 form a disulfide bridge. 2 residues coordinate biotin: Asn-36 and Ser-40. A glycan (N-linked (GlcNAc...) asparagine) is linked at Asn-54. The biotin site is built by Tyr-57, Thr-59, and Asp-63. Residues Asn-67 and Asn-93 are each glycosylated (N-linked (GlcNAc...) asparagine). Biotin contacts are provided by Ser-95, Ser-99, and Asn-140.

The protein belongs to the avidin/streptavidin family. As to quaternary structure, homotetramer. In terms of processing, glycosylated.

It is found in the secreted. In terms of biological role, forms a strong non-covalent specific complex with biotin. The polypeptide is Avidin-related protein 1 (AVR1) (Gallus gallus (Chicken)).